We begin with the raw amino-acid sequence, 100 residues long: MNLTPREKDKLLISMAAMVARRRLERGVKLNYPEAIALISDFVVEGARDGRPVAELMEAGAHVIGRSQVMEGVAEMIHDVQVEATFPDGTKLVTVHEPIR.

Belongs to the urease gamma subunit family. As to quaternary structure, heterotrimer of UreA (gamma), UreB (beta) and UreC (alpha) subunits. Three heterotrimers associate to form the active enzyme.

The protein localises to the cytoplasm. It catalyses the reaction urea + 2 H2O + H(+) = hydrogencarbonate + 2 NH4(+). It functions in the pathway nitrogen metabolism; urea degradation; CO(2) and NH(3) from urea (urease route): step 1/1. The chain is Urease subunit gamma from Rhizobium leguminosarum bv. viciae.